The following is a 2364-amino-acid chain: Cytotoxin-L (2364 aa).

The interval 1 to 91 is four-helical bundle; the sequence is MNLVNKAQLQ…EVLELKNNSL (91 aa). Residues 96–468 enclose the GT44 domain; the sequence is KNLHFIWIGG…APDVRSTINL (373 aa). The tract at residues 96-468 is glucosyltransferase region; sequence KNLHFIWIGG…APDVRSTINL (373 aa). Residues 101–103, Asn-139, 265–270, and 286–288 each bind UDP-alpha-D-glucose; these read IWI, LAAASD, and DVD. 3 residues coordinate Mg(2+): Asp-288, Glu-515, and Ser-518. UDP-alpha-D-glucose is bound at residue 518-520; the sequence is SLW. The tract at residues 544–799 is autoprocessing region; it reads GEDDNLDFAQ…KSKYLHELST (256 aa). Residues Glu-545 and Asp-546 each coordinate Zn(2+). The region spanning 567–774 is the Peptidase C80 domain; sequence LSSMKTRNKE…EESIIKDISS (208 aa). Residues Tyr-577, Lys-600, and Lys-647 each contribute to the 1D-myo-inositol hexakisphosphate site. His-653 is a binding site for Zn(2+). His-653 functions as the For protease activity in the catalytic mechanism. The Nucleophile; for protease activity role is filled by Cys-698. His-757 contributes to the Zn(2+) binding site. Residues Lys-764, Lys-775, and Lys-792 each contribute to the 1D-myo-inositol hexakisphosphate site. Residues 800-1500 form a translocation region region; it reads LLQEIRNNAN…ESIIRNIYMP (701 aa). Interaction with host SEMA6A and SEMA6B stretches follow at residues 1433-1438, 1466-1471, 1484-1495, 1504-1511, and 1596-1601; these read CMKLIE, DNETKY, FTAEFSNESIIR, NLFIYSSK, and YNNLDP. 20 Cell wall-binding repeats span residues 1813–1832, 1833–1852, 1854–1873, 1876–1895, 1926–1945, 1946–1965, 1967–1986, 1987–2006, 2007–2026, 2057–2076, 2077–2097, 2099–2118, 2119–2138, 2139–2158, 2209–2224, 2227–2249, 2250–2269, 2270–2289, 2320–2339, and 2340–2359; these read EFGL…FGNM, VSGL…PKNN, ITGF…TKSG, SIGE…QGIL, FIGK…NYRA, AVEW…KTGE, LKGL…NGIM, QTGF…DGVM, QVGY…NGER, YNGI…SNTA, VVGW…NTAE, CIGL…NGIR, QLGF…SGKI, ELGY…SGLV, ETGW…YFDP, KKAY…NGIM, RTGL…DGKM, QFGY…DGKM, YTGW…EYIA, and ATGS…DTAE. The segment at 1835 to 2364 is receptor-binding (CROPS) region; it reads GLIYINDSLY…PDTAELVVSE (530 aa).

The protein belongs to the clostridial glucosylating toxin (LCGT) family. As to quaternary structure, homomultimer; forms an inactive homomultimer at pH 8, which dissociates at pH 4, leading to cytotoxicity. Interacts with host SEMA6A; interaction promotes toxin entry into host cell. Interacts with host SEMA6B; interaction promotes toxin entry into host cell. It depends on Zn(2+) as a cofactor. Mn(2+) serves as cofactor. The cofactor is Mg(2+). Undergoes autocatalytic cleavage to release the N-terminal part (Glucosyltransferase TcsL), which constitutes the active part of the toxin, in the host cytosol. 1D-myo-inositol hexakisphosphate-binding (InsP6) activates the peptidase C80 domain and promotes autoprocessing.

The protein resides in the secreted. It localises to the host endosome membrane. Its subcellular location is the host cytoplasm. The protein localises to the host cytosol. It is found in the host cell membrane. It carries out the reaction L-threonyl-[protein] + UDP-alpha-D-glucose = 3-O-(alpha-D-glucosyl)-L-threonyl-[protein] + UDP + H(+). Protease activity is activated upon binding to 1D-myo-inositol hexakisphosphate (InsP6), which induces conformational reorganization. Functionally, precursor of a cytotoxin that targets the vascular endothelium, inducing an anti-inflammatory effect and resulting in lethal toxic shock syndrome. TcsL constitutes the main toxin that mediates the pathology of P.sordellii infection, an anaerobic Gram-positive bacterium found in soil and in the gastrointestinal and vaginal tracts of animals and humans; although the majority of carriers are asymptomatic, pathogenic P.sordellii infections arise rapidly and are highly lethal. This form constitutes the precursor of the toxin: it enters into host cells and mediates autoprocessing to release the active toxin (Glucosyltransferase TcsL) into the host cytosol. Targets vascular endothelium by binding to the semaphorin proteins SEMA6A and SEMA6B, and enters host cells via clathrin-mediated endocytosis. Once entered into host cells, acidification in the endosome promotes the membrane insertion of the translocation region and formation of a pore, leading to translocation of the GT44 and peptidase C80 domains across the endosomal membrane. This activates the peptidase C80 domain and autocatalytic processing, releasing the N-terminal part (Glucosyltransferase TcsL), which constitutes the active part of the toxin, in the cytosol. Active form of the toxin, which is released into the host cytosol following autoprocessing and inactivates small GTPases. Acts by mediating monoglucosylation of small GTPases of the Ras (H-Ras/HRAS, K-Ras/KRAS and N-Ras/NRAS) family in host cells at the conserved threonine residue located in the switch I region ('Thr-37/35'), using UDP-alpha-D-glucose as the sugar donor. Also able to catalyze monoglucosylation of some members of the Rho family (Rac1 and Rap2A), but with less efficiency than with Ras proteins. Monoglucosylation of host small GTPases completely prevents the recognition of the downstream effector, blocking the GTPases in their inactive form and leading to apoptosis. Induces an anti-inflammatory effect, mainly by inactivating Ras proteins which results in blockage of the cell cycle and killing of immune cells. The absence or moderate local inflammatory response allows C.sordellii spreading in deep tissues, production of toxin which is released in the general circulation and causes a toxic shock syndrome. The polypeptide is Cytotoxin-L (Paraclostridium sordellii (strain ATCC 9714 / DSM 2141 / JCM 3814 / LMG 15708 / NCIMB 10717 / 211) (Clostridium sordellii)).